The following is a 460-amino-acid chain: Methylenetetrahydrofolate--tRNA-(uracil-5-)-methyltransferase TrmFO (460 aa).

FAD is bound at residue 15-20 (GAGLAG).

It belongs to the MnmG family. TrmFO subfamily. Requires FAD as cofactor.

It is found in the cytoplasm. The catalysed reaction is uridine(54) in tRNA + (6R)-5,10-methylene-5,6,7,8-tetrahydrofolate + NADH + H(+) = 5-methyluridine(54) in tRNA + (6S)-5,6,7,8-tetrahydrofolate + NAD(+). It catalyses the reaction uridine(54) in tRNA + (6R)-5,10-methylene-5,6,7,8-tetrahydrofolate + NADPH + H(+) = 5-methyluridine(54) in tRNA + (6S)-5,6,7,8-tetrahydrofolate + NADP(+). Catalyzes the folate-dependent formation of 5-methyl-uridine at position 54 (M-5-U54) in all tRNAs. This chain is Methylenetetrahydrofolate--tRNA-(uracil-5-)-methyltransferase TrmFO, found in Synechococcus sp. (strain CC9902).